Reading from the N-terminus, the 342-residue chain is MATH domain and coiled-coil domain-containing protein At3g44800 (342 aa).

One can recognise an MATH domain in the interval 3–129 (YEKFTWVIKN…NNEVKIVAEV (127 aa)). Residues 253 to 327 (KVDWLERKLE…ALLEKEKGKV (75 aa)) are a coiled coil.

This chain is MATH domain and coiled-coil domain-containing protein At3g44800, found in Arabidopsis thaliana (Mouse-ear cress).